Consider the following 207-residue polypeptide: Outer-membrane lipoprotein carrier protein (207 aa).

The signal sequence occupies residues 1-21; the sequence is MRAIRMLLVSALALGTVTAYA.

It belongs to the LolA family. As to quaternary structure, monomer.

The protein localises to the periplasm. Its function is as follows. Participates in the translocation of lipoproteins from the inner membrane to the outer membrane. Only forms a complex with a lipoprotein if the residue after the N-terminal Cys is not an aspartate (The Asp acts as a targeting signal to indicate that the lipoprotein should stay in the inner membrane). This Pseudomonas putida (strain GB-1) protein is Outer-membrane lipoprotein carrier protein.